Consider the following 174-residue polypeptide: Calcineurin subunit B (174 aa).

EF-hand domains are found at residues 21-56 (EEIE…ASNP), 60-88 (RLFS…FSVH), 90-125 (NKEE…MVGT), and 131-166 (QLQQ…SNVT). Aspartate 34, asparagine 36, serine 38, serine 40, glutamate 45, aspartate 66, aspartate 68, aspartate 72, glutamate 77, aspartate 103, aspartate 105, aspartate 107, tyrosine 109, glutamate 114, aspartate 144, aspartate 146, aspartate 148, lysine 150, and glutamate 155 together coordinate Ca(2+).

The protein belongs to the calcineurin regulatory subunit family. In terms of assembly, composed of a catalytic subunit (A) and a regulatory subunit (B).

In terms of biological role, regulatory subunit of calcineurin, a calcium-dependent, calmodulin stimulated protein phosphatase. Confers calcium sensitivity. This is Calcineurin subunit B (cnb1) from Schizosaccharomyces pombe (strain 972 / ATCC 24843) (Fission yeast).